A 729-amino-acid chain; its full sequence is Neurochondrin (729 aa).

S2 is modified (N-acetylserine). Residue S2 is modified to Phosphoserine. 2 S-palmitoyl cysteine lipidation sites follow: C3 and C4. Position 75 is an asymmetric dimethylarginine (R75). S448 bears the Phosphoserine mark.

Belongs to the neurochondrin family. In terms of assembly, interacts with MCHR1. Interacts with SEMA4C. Interacts with DIAPH1 (via FH3 domain). Interacts with GRM5. Post-translationally, palmitoylated. Palmitoylation by ZDHHC1, ZDHHC3 and ZDHHC11 regulates the association of NCDN with endosome membranes. May also be palmitoylated by ZDHHC7. As to expression, expressed in brain and in peripheral nervous system (at protein level). Weakly expressed in neurites.

The protein resides in the cytoplasm. It is found in the cytosol. Its subcellular location is the endosome membrane. It localises to the cell projection. The protein localises to the dendrite. The protein resides in the postsynapse. In terms of biological role, probably involved in signal transduction, in the nervous system, via increasing cell surface localization of GRM5 and positively regulating its signaling. Required for the spatial learning process. Acts as a negative regulator of Ca(2+)-calmodulin-dependent protein kinase 2 (CaMK2) phosphorylation. May play a role in modulating melanin-concentrating hormone-mediated functions via its interaction with MCHR1 that interferes with G protein-coupled signal transduction. May be involved in bone metabolism. May also be involved in neurite outgrowth. This chain is Neurochondrin (Ncdn), found in Rattus norvegicus (Rat).